We begin with the raw amino-acid sequence, 64 residues long: MRLHHLLLVLFFVVLSAGSGFTQGVRNRLSCHRNKGVCVPSRCPRHMRQIGTCRGPPVKCCRKK.

A signal peptide spans 1–22; the sequence is MRLHHLLLVLFFVVLSAGSGFT. Cystine bridges form between cysteine 31–cysteine 60, cysteine 38–cysteine 53, and cysteine 43–cysteine 61.

It belongs to the beta-defensin family. In terms of assembly, monomer. Homodimer.

The protein resides in the secreted. The protein localises to the membrane. Functionally, has bactericidal activity. May act as a ligand for C-C chemokine receptor CCR6. Positively regulates the sperm motility and bactericidal activity in a CCR6-dependent manner. Binds to CCR6 and triggers Ca2+ mobilization in the sperm which is important for its motility. In Ovis aries (Sheep), this protein is Beta-defensin 1 (DEFB1).